A 454-amino-acid polypeptide reads, in one-letter code: MLAENLVEEFEMKEDEPWYDHQDLQQDLQLAAELGKTLLDRNTELEDSVQQMYTTNQEQLQEIEYLTKQVELLRQMNEQHAKVYEQLDVTARELEETNQKLVADSKASQQKILSLTETIECLQTNIDHLQSQVEELKSSGQGRRSPGKCDQEKPAPSFACLKELYDLRQHFVYDHVFAEKITSLQGQPSPDEEENEHLKKTVTMLQAQLSLERQKRVTMEEEYGLVLKENSELEQQLGATGAYRARALELEAEVAEMRQMLQSEHPFVNGVEKLVPDSLYVPFKEPSQSLLEEMFLTVPESHRKPLKRSSSETILSSLAGSDIVKGHEETCIRRAKAVKQRGISLLHEVDTQYSALKVKYEELLKKCQEEQDSLSHKAVQTSRAAAKDLTGVNAQSEPVASGWELASVNPEPVSSPTTPPEYKALFKEIFSCIKKTKQEIDEQRTKYRSLSSHS.

Coiled-coil stretches lie at residues 44 to 142 and 192 to 265; these read ELED…SGQG and EEEN…QSEH. The tract at residues 134–153 is disordered; it reads EELKSSGQGRRSPGKCDQEK. S311 is modified (phosphoserine). Residues 346–380 adopt a coiled-coil conformation; it reads LHEVDTQYSALKVKYEELLKKCQEEQDSLSHKAVQ.

The protein belongs to the CDR2 family.

The polypeptide is Cerebellar degeneration-related protein 2 (CDR2) (Homo sapiens (Human)).